The sequence spans 172 residues: Glutamyl-tRNA(Gln) amidotransferase subunit C-3, mitochondrial (172 aa).

The interval 49-71 (KHPSKVPQRPNKSTIDGQSTPTR) is disordered. Positions 58 to 71 (PNKSTIDGQSTPTR) are enriched in polar residues.

Belongs to the GatC family. As to quaternary structure, subunit of the heterotrimeric GatCAB amidotransferase (AdT) complex, composed of A, B and C subunits.

The protein localises to the mitochondrion. It carries out the reaction L-glutamyl-tRNA(Gln) + L-glutamine + ATP + H2O = L-glutaminyl-tRNA(Gln) + L-glutamate + ADP + phosphate + H(+). In terms of biological role, allows the formation of correctly charged Gln-tRNA(Gln) through the transamidation of misacylated Glu-tRNA(Gln) in the mitochondria. The reaction takes place in the presence of glutamine and ATP through an activated gamma-phospho-Glu-tRNA(Gln). The sequence is that of Glutamyl-tRNA(Gln) amidotransferase subunit C-3, mitochondrial from Culex quinquefasciatus (Southern house mosquito).